Here is a 303-residue protein sequence, read N- to C-terminus: MKVIFMGTPEFAVPTLKKLIAHHEVTAVFTQQPKAKGRGLSLAQSPIHQLACEHQIPVYTPSTLRNDKTINLINKVNADIIVVIAYGFIVPKAILDAKKYGCLNIHPSDLPRHRGAAPLQRTIIEGDKTSSVCIMRMDTGLDTGDILMKEDFDLEERTTLKELHNKCANLGAELLINTLVNIDNIVPIKQSSDGITYAHKLTKQEGKINWQDSAYSIDCKIRGMNPWPGVYFSYDDKIIKILEAEYLNVDHHFTPGTVISDKLEIACGSGILQVKKLQQESKKALNIEEFLLGTRILKATVLK.

108 to 111 contributes to the (6S)-5,6,7,8-tetrahydrofolate binding site; sequence SDLP.

Belongs to the Fmt family.

It catalyses the reaction L-methionyl-tRNA(fMet) + (6R)-10-formyltetrahydrofolate = N-formyl-L-methionyl-tRNA(fMet) + (6S)-5,6,7,8-tetrahydrofolate + H(+). In terms of biological role, attaches a formyl group to the free amino group of methionyl-tRNA(fMet). The formyl group appears to play a dual role in the initiator identity of N-formylmethionyl-tRNA by promoting its recognition by IF2 and preventing the misappropriation of this tRNA by the elongation apparatus. The protein is Methionyl-tRNA formyltransferase of Rickettsia canadensis (strain McKiel).